The sequence spans 310 residues: Phosphoribosylaminoimidazole-succinocarboxamide synthase (310 aa).

This sequence belongs to the SAICAR synthetase family.

It catalyses the reaction 5-amino-1-(5-phospho-D-ribosyl)imidazole-4-carboxylate + L-aspartate + ATP = (2S)-2-[5-amino-1-(5-phospho-beta-D-ribosyl)imidazole-4-carboxamido]succinate + ADP + phosphate + 2 H(+). The protein operates within purine metabolism; IMP biosynthesis via de novo pathway; 5-amino-1-(5-phospho-D-ribosyl)imidazole-4-carboxamide from 5-amino-1-(5-phospho-D-ribosyl)imidazole-4-carboxylate: step 1/2. The protein is Phosphoribosylaminoimidazole-succinocarboxamide synthase of Xanthomonas campestris pv. campestris (strain B100).